The sequence spans 200 residues: Small ribosomal subunit protein uS4 (200 aa).

The S4 RNA-binding domain maps to 94-157; sequence SRLDNLVFRA…QTSPQVKDAV (64 aa).

It belongs to the universal ribosomal protein uS4 family. In terms of assembly, part of the 30S ribosomal subunit. Contacts protein S5. The interaction surface between S4 and S5 is involved in control of translational fidelity.

In terms of biological role, one of the primary rRNA binding proteins, it binds directly to 16S rRNA where it nucleates assembly of the body of the 30S subunit. Functionally, with S5 and S12 plays an important role in translational accuracy. This chain is Small ribosomal subunit protein uS4, found in Metamycoplasma arthritidis (strain 158L3-1) (Mycoplasma arthritidis).